The primary structure comprises 122 residues: Large ribosomal subunit protein uL14 (122 aa).

This sequence belongs to the universal ribosomal protein uL14 family. In terms of assembly, part of the 50S ribosomal subunit. Forms a cluster with proteins L3 and L19. In the 70S ribosome, L14 and L19 interact and together make contacts with the 16S rRNA in bridges B5 and B8.

In terms of biological role, binds to 23S rRNA. Forms part of two intersubunit bridges in the 70S ribosome. The sequence is that of Large ribosomal subunit protein uL14 from Amoebophilus asiaticus (strain 5a2).